A 107-amino-acid polypeptide reads, in one-letter code: Iron-binding protein IscA (107 aa).

Residues Cys-35, Cys-99, and Cys-101 each coordinate Fe cation.

The protein belongs to the HesB/IscA family. Homodimer; may form tetramers and higher multimers. Fe cation is required as a cofactor.

Functionally, is able to transfer iron-sulfur clusters to apo-ferredoxin. Multiple cycles of [2Fe2S] cluster formation and transfer are observed, suggesting that IscA acts catalytically. Recruits intracellular free iron so as to provide iron for the assembly of transient iron-sulfur cluster in IscU in the presence of IscS, L-cysteine and the thioredoxin reductase system TrxA/TrxB. This Enterobacter sp. (strain 638) protein is Iron-binding protein IscA.